The sequence spans 562 residues: MSQSKYRQLDVRAPRGTTLTAKSWLTEAPLRMLMNNLDPDVAENPHELVVYGGIGRAARNWECYDAIVKALKNLESDETLLVQSGKPVGVFKTHENSPRVLIANSNLVPHWATWEHFNELDAKGLAMYGQMTAGSWIYIGSQGIVQGTYETFVEAGRQHYQGSLKGRWVLTAGLGGMGGAQPLAATLAGACSLNIECQQSRIDFRLRTRYVDEQATSLDDALARIKKYTAEGRAISIALCGNAAEIVPELVKRGVRPDMVTDQTSAHDPLHGYLPKGWSWEEYQQKAESDPQGTILAAKRSMADHVQAMLAFHEMGVPTFDYGNNIRQMAQEVGVSNAFDFPGFVPAYIRPLFCRGIGPFRWVALSGDPQDIYKTDAKVKEIIKDDQHLHHWLDMARERISFQGLPARICWVGLEWRQKLGLAFNEMVRSGEVSAPIVIGRDHLDSGSVASPNRETEAMRDGSDAVSDWPLLNALLNTASGATWVSLHHGGGVGMGFSQHSGMVIVCDGTDEAAARIARVLRNDPATGVMRHADAGYEIAIECAAEQGLNLPMVAATQGNAK.

NAD(+)-binding positions include 52–53 (GG), Gln130, 176–178 (GMG), Glu196, Arg201, 242–243 (NA), 263–267 (QTSAH), 273–274 (YL), and Tyr322. Cys410 is a catalytic residue. Gly492 serves as a coordination point for NAD(+).

The protein belongs to the urocanase family. NAD(+) is required as a cofactor.

Its subcellular location is the cytoplasm. It carries out the reaction 4-imidazolone-5-propanoate = trans-urocanate + H2O. It participates in amino-acid degradation; L-histidine degradation into L-glutamate; N-formimidoyl-L-glutamate from L-histidine: step 2/3. In terms of biological role, catalyzes the conversion of urocanate to 4-imidazolone-5-propionate. In Klebsiella pneumoniae subsp. pneumoniae (strain ATCC 700721 / MGH 78578), this protein is Urocanate hydratase.